Consider the following 865-residue polypeptide: AdoMet-dependent rRNA methyltransferase SPB1 (865 aa).

Positions 56, 58, 76, 92, and 117 each coordinate S-adenosyl-L-methionine. Lys157 serves as the catalytic Proton acceptor. 2 coiled-coil regions span residues 358-400 and 462-492; these read ESMD…VRMQ and GETD…RKAA. Disordered stretches follow at residues 370 to 396 and 443 to 676; these read LEKL…QKDI and VVAS…TKDG. Over residues 386 to 396 the composition is skewed to basic and acidic residues; sequence RKENERKQKDI. The span at 463-483 shows a compositional bias: acidic residues; that stretch reads ETDDESDEELDRLETELDDMY. Residues 484-497 show a composition bias toward basic and acidic residues; that stretch reads DQFRERKAASDAKY. The segment covering 526–545 has biased composition (acidic residues); sequence ISDDSELEEESSGDSDDEDD. Over residues 556 to 566 the composition is skewed to polar residues; the sequence is LDTTPSDNSGL. Positions 600 to 609 are enriched in acidic residues; it reads GEDEDADMED. 2 stretches are compositionally biased toward basic and acidic residues: residues 610-627 and 659-676; these read TVSK…ADKK and KSGK…TKDG. The stretch at 762–789 forms a coiled coil; it reads REAKGRKKMKAAQRLEKLKKKSDLLVNE.

It belongs to the class I-like SAM-binding methyltransferase superfamily. RNA methyltransferase RlmE family. SPB1 subfamily. In terms of assembly, component of the nucleolar and nucleoplasmic pre-60S ribosomal particle.

Its subcellular location is the nucleus. The protein localises to the nucleolus. It catalyses the reaction a ribonucleotide in rRNA + S-adenosyl-L-methionine = a 2'-O-methylribonucleotide in rRNA + S-adenosyl-L-homocysteine + H(+). Its function is as follows. Required for proper assembly of pre-ribosomal particles during the biogenesis of the 60S ribosomal subunit. This is AdoMet-dependent rRNA methyltransferase SPB1 from Pyricularia oryzae (strain 70-15 / ATCC MYA-4617 / FGSC 8958) (Rice blast fungus).